The following is a 502-amino-acid chain: Glycerol kinase (502 aa).

ADP is bound at residue Thr13. ATP is bound by residues Thr13, Thr14, and Ser15. Thr13 serves as a coordination point for sn-glycerol 3-phosphate. Arg17 contributes to the ADP binding site. Residues Arg83, Glu84, Tyr136, and Asp246 each coordinate sn-glycerol 3-phosphate. Residues Arg83, Glu84, Tyr136, Asp246, and Gln247 each coordinate glycerol. ADP is bound by residues Thr268 and Gly311. Thr268, Gly311, Gln315, and Gly412 together coordinate ATP. Residues Gly412 and Asn416 each coordinate ADP.

It belongs to the FGGY kinase family.

It catalyses the reaction glycerol + ATP = sn-glycerol 3-phosphate + ADP + H(+). It participates in polyol metabolism; glycerol degradation via glycerol kinase pathway; sn-glycerol 3-phosphate from glycerol: step 1/1. Inhibited by fructose 1,6-bisphosphate (FBP). Functionally, key enzyme in the regulation of glycerol uptake and metabolism. Catalyzes the phosphorylation of glycerol to yield sn-glycerol 3-phosphate. This chain is Glycerol kinase, found in Francisella tularensis subsp. holarctica (strain FTNF002-00 / FTA).